We begin with the raw amino-acid sequence, 588 residues long: Aspartate--tRNA ligase (588 aa).

E177 is an L-aspartate binding site. Positions 201–204 are aspartate; the sequence is QLFK. L-aspartate is bound at residue R223. ATP contacts are provided by residues 223–225 and Q232; that span reads RDE. H451 serves as a coordination point for L-aspartate. E485 contributes to the ATP binding site. Position 492 (R492) interacts with L-aspartate. Position 537-540 (537-540) interacts with ATP; it reads GLDR.

It belongs to the class-II aminoacyl-tRNA synthetase family. Type 1 subfamily. As to quaternary structure, homodimer.

The protein localises to the cytoplasm. The enzyme catalyses tRNA(Asp) + L-aspartate + ATP = L-aspartyl-tRNA(Asp) + AMP + diphosphate. Catalyzes the attachment of L-aspartate to tRNA(Asp) in a two-step reaction: L-aspartate is first activated by ATP to form Asp-AMP and then transferred to the acceptor end of tRNA(Asp). This chain is Aspartate--tRNA ligase, found in Staphylococcus epidermidis (strain ATCC 35984 / DSM 28319 / BCRC 17069 / CCUG 31568 / BM 3577 / RP62A).